Here is a 327-residue protein sequence, read N- to C-terminus: MEYQEEASLASAEDSTFIASSPVQSVSEMKSIKQKSFQYFDDYEKNVSDKTIQFQKLQMTAKEIIDAFERDSTQRTLQIESLESKIGEQERDLNNEKLASETLREKTQLLEKENGALKVENGYLYEKSRKLEEEMAHLKKKCNVYKSKFEESSLRCKSLYSSNTKLKDSMETMKRRMETETKEMNKIKPKNDSESDRFKRNSQSLSQQSPLLDVHSPDNSNHRTMLNINNSSPIKPKKIFKPNEVKNRISRLQKTFADLENQHHSFQQICQTLRKRLENDSSTTKQRLSKLEEIIRNRAPPSYSFSLNCSHTYQPVSCVEPVNHDLS.

Residues 66–188 (DAFERDSTQR…TETKEMNKIK (123 aa)) adopt a coiled-coil conformation. Residues 175–199 (RRMETETKEMNKIKPKNDSESDRFK) are compositionally biased toward basic and acidic residues. Positions 175-234 (RRMETETKEMNKIKPKNDSESDRFKRNSQSLSQQSPLLDVHSPDNSNHRTMLNINNSSPI) are disordered. The span at 202-212 (SQSLSQQSPLL) shows a compositional bias: low complexity. Polar residues predominate over residues 217 to 232 (PDNSNHRTMLNINNSS). Residues 243–297 (NEVKNRISRLQKTFADLENQHHSFQQICQTLRKRLENDSSTTKQRLSKLEEIIRN) adopt a coiled-coil conformation.

Interacts with alp4, kms1 and mbo1.

It is found in the nucleus. The protein localises to the cytoplasm. Its subcellular location is the cytoskeleton. The protein resides in the microtubule organizing center. It localises to the spindle pole body. Has a role in meiotic nuclear oscillation and recombination. Required to remodel astral microtubules into the 'horsetail' astral array maintaining the 'horsetail' nuclear movement. Promotes homologous paring of chromosomes during this movement. In Schizosaccharomyces pombe (strain 972 / ATCC 24843) (Fission yeast), this protein is Meiotic coiled-coil protein 6 (mcp6).